Here is a 141-residue protein sequence, read N- to C-terminus: Hemoglobin subunit beta-C (141 aa).

Positions Pro-1–His-141 constitute a Globin domain. Residues His-58 and His-87 each coordinate heme b.

This sequence belongs to the globin family. In terms of assembly, heterotetramer of two alpha chains and two beta chains. In terms of tissue distribution, red blood cells.

In terms of biological role, involved in oxygen transport from the lung to the various peripheral tissues. The chain is Hemoglobin subunit beta-C (HBBC) from Ovis aries musimon (Mouflon).